Here is a 304-residue protein sequence, read N- to C-terminus: MPQQLSPINIETKKAISNARLKPLDIHYNESKPTTIQNTGKLVRINFKGGYISGGFLPNEYVLSSLHIYWGKEDDYGSNHLIDVYKYSGEINLVHWNKKKYSSYEEAKKHDDGLIIISIFLQVSDHKNVYFQKIVNQLDSIRSANTSAPFDSVFYLDNLLPSTLDYFTYLGTTIKHSADAVWIIFPTPINIHSDQLSKFRTLLSSSNHDGKPYYITENYRNPYKLNDDTQVYYSGEIIRAATTSPARENYFMRWLSDLRETCFSYYQKYIEGNKTFAIIAIVFVFILTAILFLMSRRYSREKQN.

In terms of domain architecture, Alpha-carbonic anhydrase spans 1-235 (MPQQLSPINI…NDDTQVYYSG (235 aa)). Over 1 to 275 (MPQQLSPINI…YQKYIEGNKT (275 aa)) the chain is Virion surface. Residues 276-294 (FAIIAIVFVFILTAILFLM) form a helical membrane-spanning segment. At 295–304 (SRRYSREKQN) the chain is on the intravirion side.

The protein belongs to the alpha-carbonic anhydrase family. Homodimer; disulfide-linked. In terms of processing, apparently non-glycosylated.

The protein localises to the virion membrane. Its function is as follows. Binds to chondroitin sulfate on the cell surface to provide virion attachment to target cell. The chain is Cell surface-binding protein OPG105 (OPG105) from Vaccinia virus (strain Copenhagen) (VACV).